The sequence spans 204 residues: N-(5'-phosphoribosyl)anthranilate isomerase (204 aa).

Belongs to the TrpF family.

The catalysed reaction is N-(5-phospho-beta-D-ribosyl)anthranilate = 1-(2-carboxyphenylamino)-1-deoxy-D-ribulose 5-phosphate. The protein operates within amino-acid biosynthesis; L-tryptophan biosynthesis; L-tryptophan from chorismate: step 3/5. The polypeptide is N-(5'-phosphoribosyl)anthranilate isomerase (Pseudomonas fluorescens (strain Pf0-1)).